Reading from the N-terminus, the 559-residue chain is Formate--tetrahydrofolate ligase (559 aa).

68–75 contributes to the ATP binding site; sequence TPAGEGKT.

The protein belongs to the formate--tetrahydrofolate ligase family.

It carries out the reaction (6S)-5,6,7,8-tetrahydrofolate + formate + ATP = (6R)-10-formyltetrahydrofolate + ADP + phosphate. Its pathway is one-carbon metabolism; tetrahydrofolate interconversion. The sequence is that of Formate--tetrahydrofolate ligase from Rhizobium etli (strain CIAT 652).